Consider the following 62-residue polypeptide: Beta-defensin 33 (62 aa).

Positions 1 to 20 (MRLLFLLFLLLVCLAQKTSG) are cleaved as a signal peptide. Cystine bridges form between cysteine 30–cysteine 59, cysteine 37–cysteine 52, and cysteine 45–cysteine 60.

It belongs to the beta-defensin family.

It localises to the secreted. Has antibacterial activity. The polypeptide is Beta-defensin 33 (Defb33) (Rattus norvegicus (Rat)).